Here is a 345-residue protein sequence, read N- to C-terminus: D-fructose 1,6-bisphosphatase class 2/sedoheptulose 1,7-bisphosphatase (345 aa).

Residues aspartate 33, glutamate 57, aspartate 97, and glutamate 100 each contribute to the Mn(2+) site. Substrate-binding positions include 100-102, tyrosine 131, 176-178, and 198-200; these read EGT, RPR, and DGD. Glutamate 225 is a Mn(2+) binding site.

This sequence belongs to the FBPase class 2 family. In terms of assembly, homotetramer. Mn(2+) serves as cofactor.

The enzyme catalyses beta-D-fructose 1,6-bisphosphate + H2O = beta-D-fructose 6-phosphate + phosphate. The catalysed reaction is D-sedoheptulose 1,7-bisphosphate + H2O = D-sedoheptulose 7-phosphate + phosphate. The protein operates within carbohydrate biosynthesis; Calvin cycle. Catalyzes the hydrolysis of fructose 1,6-bisphosphate (Fru 1,6-P2) and sedoheptulose 1,7-bisphosphate (Sed 1,7-P2) to fructose 6-phosphate and sedoheptulose 7-phosphate, respectively. This is D-fructose 1,6-bisphosphatase class 2/sedoheptulose 1,7-bisphosphatase from Crocosphaera subtropica (strain ATCC 51142 / BH68) (Cyanothece sp. (strain ATCC 51142)).